A 239-amino-acid chain; its full sequence is MNKNIIIKSIAALTILTSITGVGTTVVDGIQQTAKAENSVKLITNTNVAPYSGVTWMGAGTGFVVGNHTIITNKHVTYHMKVGDEIKAHPNGFYNNGGGLYKVTKIVDYPGKEDIAVVQVEEKSTQPKGRKFKDFTSKFNIASEAKENEPISVIGYPNPNGNKLQMYESTGKVLSVNGNIVTSDAVVQPGSSGSPILNSKREAIGVMYASDKPTGESTRSFAVYFSPEIKKFIADNLDK.

The N-terminal stretch at 1–36 (MNKNIIIKSIAALTILTSITGVGTTVVDGIQQTAKA) is a signal peptide. Residues His75, Asp114, and Ser192 each act as charge relay system in the active site.

It belongs to the peptidase S1B family.

Its subcellular location is the secreted. This is Serine protease SplD (splD) from Staphylococcus aureus (strain Mu3 / ATCC 700698).